A 116-amino-acid chain; its full sequence is S-adenosylmethionine decarboxylase proenzyme (116 aa).

The active-site Schiff-base intermediate with substrate; via pyruvic acid is Ser-63. Position 63 is a pyruvic acid (Ser); by autocatalysis (Ser-63). His-68 acts as the Proton acceptor; for processing activity in catalysis. The active-site Proton donor; for catalytic activity is the Cys-83.

The protein belongs to the prokaryotic AdoMetDC family. Type 1 subfamily. Heterotetramer of two alpha and two beta chains arranged as a dimer of alpha/beta heterodimers. Pyruvate serves as cofactor. Is synthesized initially as an inactive proenzyme. Formation of the active enzyme involves a self-maturation process in which the active site pyruvoyl group is generated from an internal serine residue via an autocatalytic post-translational modification. Two non-identical subunits are generated from the proenzyme in this reaction, and the pyruvate is formed at the N-terminus of the alpha chain, which is derived from the carboxyl end of the proenzyme. The post-translation cleavage follows an unusual pathway, termed non-hydrolytic serinolysis, in which the side chain hydroxyl group of the serine supplies its oxygen atom to form the C-terminus of the beta chain, while the remainder of the serine residue undergoes an oxidative deamination to produce ammonia and the pyruvoyl group blocking the N-terminus of the alpha chain.

The catalysed reaction is S-adenosyl-L-methionine + H(+) = S-adenosyl 3-(methylsulfanyl)propylamine + CO2. Its pathway is amine and polyamine biosynthesis; S-adenosylmethioninamine biosynthesis; S-adenosylmethioninamine from S-adenosyl-L-methionine: step 1/1. In terms of biological role, catalyzes the decarboxylation of S-adenosylmethionine to S-adenosylmethioninamine (dcAdoMet), the propylamine donor required for the synthesis of the polyamines spermine and spermidine from the diamine putrescine. The polypeptide is S-adenosylmethionine decarboxylase proenzyme (Clostridium botulinum (strain 657 / Type Ba4)).